We begin with the raw amino-acid sequence, 367 residues long: Heparan sulfate glucosamine 3-O-sulfotransferase 2 (367 aa).

The Cytoplasmic portion of the chain corresponds to Met1–Arg19. A helical; Signal-anchor for type II membrane protein transmembrane segment spans residues Leu20–Cys39. Over Cys40–Glu367 the chain is Lumenal. The interval Leu66–Pro115 is disordered. A compositionally biased stretch (pro residues) spans Cys73–Pro83. Residues Ser84–Pro96 are compositionally biased toward low complexity. Asn102 carries N-linked (GlcNAc...) asparagine glycosylation. Lys124–Arg128 contacts 3'-phosphoadenylyl sulfate. Substrate-binding positions include Glu146–Arg152 and Lys177–Ser180. The N-linked (GlcNAc...) asparagine glycan is linked to Asn193. Residues Arg205 and Ser213 each coordinate 3'-phosphoadenylyl sulfate. Asn235 is a glycosylation site (N-linked (GlcNAc...) asparagine). Position 245–246 (Trp245–Asn246) interacts with substrate. N-linked (GlcNAc...) asparagine glycosylation occurs at Asn306. A disulfide bridge links Cys313 with Cys325. Lys330–His334 contributes to the 3'-phosphoadenylyl sulfate binding site.

This sequence belongs to the sulfotransferase 1 family.

It localises to the golgi apparatus membrane. It catalyses the reaction alpha-D-glucosaminyl-[heparan sulfate](n) + 3'-phosphoadenylyl sulfate = 3-sulfo-alpha-D-glucosaminyl-[heparan sulfate](n) + adenosine 3',5'-bisphosphate + H(+). Its function is as follows. Sulfotransferase that utilizes 3'-phospho-5'-adenylyl sulfate (PAPS) to catalyze the transfer of a sulfo group to an N-unsubstituted glucosamine linked to a 2-O-sulfo iduronic acid unit on heparan sulfate. Catalyzes the O-sulfation of glucosamine in GlcA2S-GlcNS. Unlike HS3ST1/3-OST-1, does not convert non-anticoagulant heparan sulfate to anticoagulant heparan sulfate. This is Heparan sulfate glucosamine 3-O-sulfotransferase 2 (Hs3st2) from Mus musculus (Mouse).